Reading from the N-terminus, the 632-residue chain is 1-deoxy-D-xylulose-5-phosphate synthase (632 aa).

Thiamine diphosphate is bound by residues histidine 74 and 115 to 117 (AHS). A Mg(2+)-binding site is contributed by aspartate 146. Thiamine diphosphate-binding positions include 147–148 (GA), asparagine 176, tyrosine 283, and glutamate 365. Residue asparagine 176 coordinates Mg(2+).

It belongs to the transketolase family. DXPS subfamily. Homodimer. Mg(2+) is required as a cofactor. The cofactor is thiamine diphosphate.

The enzyme catalyses D-glyceraldehyde 3-phosphate + pyruvate + H(+) = 1-deoxy-D-xylulose 5-phosphate + CO2. Its pathway is metabolic intermediate biosynthesis; 1-deoxy-D-xylulose 5-phosphate biosynthesis; 1-deoxy-D-xylulose 5-phosphate from D-glyceraldehyde 3-phosphate and pyruvate: step 1/1. Functionally, catalyzes the acyloin condensation reaction between C atoms 2 and 3 of pyruvate and glyceraldehyde 3-phosphate to yield 1-deoxy-D-xylulose-5-phosphate (DXP). The polypeptide is 1-deoxy-D-xylulose-5-phosphate synthase (Paraburkholderia phymatum (strain DSM 17167 / CIP 108236 / LMG 21445 / STM815) (Burkholderia phymatum)).